The following is a 190-amino-acid chain: NADH-quinone oxidoreductase subunit B (190 aa).

Positions 39, 40, 104, and 135 each coordinate [4Fe-4S] cluster.

This sequence belongs to the complex I 20 kDa subunit family. As to quaternary structure, NDH-1 is composed of 14 different subunits. Subunits NuoB, C, D, E, F, and G constitute the peripheral sector of the complex. It depends on [4Fe-4S] cluster as a cofactor.

The protein localises to the cell inner membrane. It catalyses the reaction a quinone + NADH + 5 H(+)(in) = a quinol + NAD(+) + 4 H(+)(out). In terms of biological role, NDH-1 shuttles electrons from NADH, via FMN and iron-sulfur (Fe-S) centers, to quinones in the respiratory chain. The immediate electron acceptor for the enzyme in this species is believed to be a menaquinone. Couples the redox reaction to proton translocation (for every two electrons transferred, four hydrogen ions are translocated across the cytoplasmic membrane), and thus conserves the redox energy in a proton gradient. This is NADH-quinone oxidoreductase subunit B from Chlorobium chlorochromatii (strain CaD3).